Reading from the N-terminus, the 283-residue chain is MSDRSAVLPQYLFPKQALTNFAGWVAGKERGAVTTWIIRRFVAKYGVDMGEALESDINHYKSFNQFFTRALKPGVRPLAQADLVCPVDGAISQFGAIEGDQIFQAKGHNYSTTALVGGDAVLAARFAHGSFATLYLSPKDYHRIHMPCDGRLVRMIHVPGDLFSVNPVTARGVPGLFARNERVVCVFESAHGPFVLVLVGATIVGSMATVWHGVVNPPRGGELREWHYADQQILLKQGEEMGRFLLGSTVVMLFPPPPLAFNPDWAPTRPVRLGEAMANLANL.

Residues Asp-88, His-145, and Ser-248 each act as charge relay system; for autoendoproteolytic cleavage activity in the active site. Ser-248 functions as the Schiff-base intermediate with substrate; via pyruvic acid; for decarboxylase activity in the catalytic mechanism. Ser-248 bears the Pyruvic acid (Ser); by autocatalysis mark.

It belongs to the phosphatidylserine decarboxylase family. PSD-B subfamily. Prokaryotic type I sub-subfamily. As to quaternary structure, heterodimer of a large membrane-associated beta subunit and a small pyruvoyl-containing alpha subunit. Pyruvate is required as a cofactor. Post-translationally, is synthesized initially as an inactive proenzyme. Formation of the active enzyme involves a self-maturation process in which the active site pyruvoyl group is generated from an internal serine residue via an autocatalytic post-translational modification. Two non-identical subunits are generated from the proenzyme in this reaction, and the pyruvate is formed at the N-terminus of the alpha chain, which is derived from the carboxyl end of the proenzyme. The autoendoproteolytic cleavage occurs by a canonical serine protease mechanism, in which the side chain hydroxyl group of the serine supplies its oxygen atom to form the C-terminus of the beta chain, while the remainder of the serine residue undergoes an oxidative deamination to produce ammonia and the pyruvoyl prosthetic group on the alpha chain. During this reaction, the Ser that is part of the protease active site of the proenzyme becomes the pyruvoyl prosthetic group, which constitutes an essential element of the active site of the mature decarboxylase.

The protein localises to the cell membrane. The enzyme catalyses a 1,2-diacyl-sn-glycero-3-phospho-L-serine + H(+) = a 1,2-diacyl-sn-glycero-3-phosphoethanolamine + CO2. It functions in the pathway phospholipid metabolism; phosphatidylethanolamine biosynthesis; phosphatidylethanolamine from CDP-diacylglycerol: step 2/2. Catalyzes the formation of phosphatidylethanolamine (PtdEtn) from phosphatidylserine (PtdSer). The polypeptide is Phosphatidylserine decarboxylase proenzyme (Variovorax paradoxus (strain S110)).